A 149-amino-acid chain; its full sequence is uncharacterized protein (149 aa).

A disordered region spans residues 1-103; that stretch reads MFGLKVKNAE…SPTQGSRLRH (103 aa). Basic and acidic residues predominate over residues 7 to 18; that stretch reads KNAEADTAKSNE. Positions 26–41 are enriched in low complexity; the sequence is TGSSTTSGSGQSTQRG. Positions 61 to 72 are enriched in polar residues; sequence GSQGNSGDQGTE.

This sequence belongs to the adhesin P1 family.

This is an uncharacterized protein from Mycoplasma pneumoniae (strain ATCC 29342 / M129 / Subtype 1) (Mycoplasmoides pneumoniae).